The sequence spans 535 residues: CTP synthase (535 aa).

Residues 1-268 (MKTKYIFVTG…DSLVCKKLEL (268 aa)) form an amidoligase domain region. Ser14 is a CTP binding site. Ser14 is a UTP binding site. 15-20 (SLGKGI) is a binding site for ATP. Tyr55 is an L-glutamine binding site. Residue Asp72 participates in ATP binding. The Mg(2+) site is built by Asp72 and Glu142. CTP is bound by residues 149 to 151 (DIE), 189 to 194 (KTKPTQ), and Lys225. UTP is bound by residues 189–194 (KTKPTQ) and Lys225. A Glutamine amidotransferase type-1 domain is found at 293–535 (TIGLVGKYVE…IKVACTVKEK (243 aa)). Gly355 is a binding site for L-glutamine. Cys382 acts as the Nucleophile; for glutamine hydrolysis in catalysis. Residues 383–386 (LGMQ), Glu406, and Arg463 each bind L-glutamine. Catalysis depends on residues His508 and Glu510.

This sequence belongs to the CTP synthase family. Homotetramer.

The enzyme catalyses UTP + L-glutamine + ATP + H2O = CTP + L-glutamate + ADP + phosphate + 2 H(+). It carries out the reaction L-glutamine + H2O = L-glutamate + NH4(+). It catalyses the reaction UTP + NH4(+) + ATP = CTP + ADP + phosphate + 2 H(+). It participates in pyrimidine metabolism; CTP biosynthesis via de novo pathway; CTP from UDP: step 2/2. With respect to regulation, allosterically activated by GTP, when glutamine is the substrate; GTP has no effect on the reaction when ammonia is the substrate. The allosteric effector GTP functions by stabilizing the protein conformation that binds the tetrahedral intermediate(s) formed during glutamine hydrolysis. Inhibited by the product CTP, via allosteric rather than competitive inhibition. Catalyzes the ATP-dependent amination of UTP to CTP with either L-glutamine or ammonia as the source of nitrogen. Regulates intracellular CTP levels through interactions with the four ribonucleotide triphosphates. The chain is CTP synthase from Clostridium acetobutylicum (strain ATCC 824 / DSM 792 / JCM 1419 / IAM 19013 / LMG 5710 / NBRC 13948 / NRRL B-527 / VKM B-1787 / 2291 / W).